A 379-amino-acid polypeptide reads, in one-letter code: Chaperone protein DnaJ (379 aa).

The 66-residue stretch at 5-70 (DYYEVLGVGK…EKKAAYDQYG (66 aa)) folds into the J domain. The CR-type zinc finger occupies 139–217 (GHEAQIRVPH…CHGQGKLKSQ (79 aa)). The Zn(2+) site is built by C152, C155, C169, C172, C191, C194, C205, and C208. CXXCXGXG motif repeat units lie at residues 152–159 (CEHCHGNG), 169–176 (CPTCNGVG), 191–198 (CPKCHGSG), and 205–212 (CTKCHGQG).

Belongs to the DnaJ family. Homodimer. Zn(2+) is required as a cofactor.

It is found in the cytoplasm. Participates actively in the response to hyperosmotic and heat shock by preventing the aggregation of stress-denatured proteins and by disaggregating proteins, also in an autonomous, DnaK-independent fashion. Unfolded proteins bind initially to DnaJ; upon interaction with the DnaJ-bound protein, DnaK hydrolyzes its bound ATP, resulting in the formation of a stable complex. GrpE releases ADP from DnaK; ATP binding to DnaK triggers the release of the substrate protein, thus completing the reaction cycle. Several rounds of ATP-dependent interactions between DnaJ, DnaK and GrpE are required for fully efficient folding. Also involved, together with DnaK and GrpE, in the DNA replication of plasmids through activation of initiation proteins. The protein is Chaperone protein DnaJ of Cupriavidus metallidurans (strain ATCC 43123 / DSM 2839 / NBRC 102507 / CH34) (Ralstonia metallidurans).